Consider the following 529-residue polypeptide: Peptide chain release factor 3 (529 aa).

A tr-type G domain is found at 11–280 (AKRRTFAIIS…GLVEWAPAPM (270 aa)). GTP-binding positions include 20 to 27 (SHPDAGKT), 88 to 92 (DTPGH), and 142 to 145 (NKLD).

The protein belongs to the TRAFAC class translation factor GTPase superfamily. Classic translation factor GTPase family. PrfC subfamily.

The protein resides in the cytoplasm. In terms of biological role, increases the formation of ribosomal termination complexes and stimulates activities of RF-1 and RF-2. It binds guanine nucleotides and has strong preference for UGA stop codons. It may interact directly with the ribosome. The stimulation of RF-1 and RF-2 is significantly reduced by GTP and GDP, but not by GMP. The chain is Peptide chain release factor 3 from Yersinia pseudotuberculosis serotype O:1b (strain IP 31758).